The primary structure comprises 403 residues: Phosphoglycerate kinase (403 aa).

Residues 21 to 23 (DFN), arginine 36, 59 to 62 (HLGR), arginine 119, and arginine 154 contribute to the substrate site. Residues lysine 207, glycine 299, glutamate 330, and 357–360 (GGDA) each bind ATP.

The protein belongs to the phosphoglycerate kinase family. As to quaternary structure, monomer.

It localises to the cytoplasm. The catalysed reaction is (2R)-3-phosphoglycerate + ATP = (2R)-3-phospho-glyceroyl phosphate + ADP. The protein operates within carbohydrate degradation; glycolysis; pyruvate from D-glyceraldehyde 3-phosphate: step 2/5. The chain is Phosphoglycerate kinase (pgk) from Chlamydia muridarum (strain MoPn / Nigg).